A 67-amino-acid polypeptide reads, in one-letter code: Ferredoxin FdxE (67 aa).

5 residues coordinate [3Fe-4S] cluster: Cys10, Val11, Gln15, Cys16, and Cys54.

Interacts with the cytochrome P450 143 with high affinity (Kd=84 nM). [3Fe-4S] cluster is required as a cofactor.

Functionally, ferredoxin that is the redox partner of cytochrome CYP143, a cytochrome P450 encoded by an adjacent gene. The sequence is that of Ferredoxin FdxE from Mycobacterium tuberculosis (strain ATCC 25618 / H37Rv).